A 280-amino-acid polypeptide reads, in one-letter code: uncharacterized protein (280 aa).

Disordered stretches follow at residues 20–41 (DVKKSQQQQQQQPQAPPQQQQQ), 170–199 (INSPPPPQEEEKPQLSKKEEPEWLKGKDKA), and 251–280 (GNSKPYTSSNATNKPFTTASKSTNSYSFSF). Positions 25-41 (QQQQQQQPQAPPQQQQQ) are enriched in low complexity. A compositionally biased stretch (basic and acidic residues) spans 178 to 199 (EEEKPQLSKKEEPEWLKGKDKA).

This is an uncharacterized protein from Dictyostelium discoideum (Social amoeba).